We begin with the raw amino-acid sequence, 596 residues long: PDZ and LIM domain protein 5 (596 aa).

S2 is modified (N-acetylserine). S2 bears the Phosphoserine mark. One can recognise a PDZ domain in the interval 2-85; that stretch reads SNYSVSLVGP…SLNMTLQRAS (84 aa). The residue at position 89 (K89) is an N6-acetyllysine; alternate. K89 is subject to N6-succinyllysine; alternate. K89 participates in a covalent cross-link: Glycyl lysine isopeptide (Lys-Gly) (interchain with G-Cter in SUMO2); alternate. Phosphoserine is present on residues S111, S134, and S137. 3 disordered regions span residues 121 to 165, 196 to 240, and 255 to 340; these read NNMA…SPSP, AGKT…GPPR, and THSD…RPGV. Residues 134 to 143 are compositionally biased toward polar residues; it reads SVSSPKVTSI. Residues 144–165 are compositionally biased toward low complexity; that stretch reads PSPSSAFTPAHATTSSHASPSP. 2 stretches are compositionally biased toward polar residues: residues 205–219 and 226–237; these read RQPTVTSVCSETSQE and RGSQGDSKQQNG. Phosphoserine occurs at positions 228 and 260. 2 stretches are compositionally biased toward basic and acidic residues: residues 258-273 and 293-304; these read DASKKRLIEDTEDWRP and EHLKESEADNTK. Residues 305-335 show a composition bias toward polar residues; sequence KANNSQEPSPQLASSVASTRSMPESLDSPTS. Phosphoserine occurs at positions 309, 313, and 322. The residue at position 350 (K350) is an N6-acetyllysine. A disordered region spans residues 354-381; sequence STGVIKSPSWQRPNQGVPSTGRISNSAT. 2 positions are modified to phosphoserine: S360 and S362. Residues 361–381 are compositionally biased toward polar residues; the sequence is PSWQRPNQGVPSTGRISNSAT. 3 LIM zinc-binding domains span residues 418 to 477, 477 to 536, and 536 to 596; these read PMCA…FFAP, PECG…LFGT, and TICH…SVNF.

As to quaternary structure, interacts with various PKC isoforms through the LIM domains. Interacts with actin and alpha-actinin through the PDZ domain. Interacts (via LIM domains) with SIPA1L1/SPAR; this interaction may occur preferentially with isoform 1. In terms of tissue distribution, heart and skeletal muscle specific. Expression is commonly increased in the brain of patients with bipolar disorder, schizophrenia, and major depression.

The protein localises to the postsynaptic density. Its subcellular location is the presynapse. It localises to the postsynapse. It is found in the cytoplasm. The protein resides in the cytosol. Functionally, may play an important role in the heart development by scaffolding PKC to the Z-disk region. May play a role in the regulation of cardiomyocyte expansion. Isoforms lacking the LIM domains may negatively modulate the scaffolding activity of isoform 1. Overexpression promotes the development of heart hypertrophy. Contributes to the regulation of dendritic spine morphogenesis in neurons. May be required to restrain postsynaptic growth of excitatory synapses. Isoform 1, but not isoform 2, expression favors spine thinning and elongation. This Homo sapiens (Human) protein is PDZ and LIM domain protein 5.